The chain runs to 469 residues: 3-isopropylmalate dehydratase large subunit (469 aa).

3 residues coordinate [4Fe-4S] cluster: Cys-349, Cys-409, and Cys-412.

The protein belongs to the aconitase/IPM isomerase family. LeuC type 1 subfamily. Heterodimer of LeuC and LeuD. It depends on [4Fe-4S] cluster as a cofactor.

It catalyses the reaction (2R,3S)-3-isopropylmalate = (2S)-2-isopropylmalate. It functions in the pathway amino-acid biosynthesis; L-leucine biosynthesis; L-leucine from 3-methyl-2-oxobutanoate: step 2/4. Functionally, catalyzes the isomerization between 2-isopropylmalate and 3-isopropylmalate, via the formation of 2-isopropylmaleate. This is 3-isopropylmalate dehydratase large subunit from Methylorubrum extorquens (strain CM4 / NCIMB 13688) (Methylobacterium extorquens).